We begin with the raw amino-acid sequence, 189 residues long: dCTP deaminase (189 aa).

Residues 112-117 (KSTYAR), 136-138 (TLE), Gln157, Tyr171, and Gln181 each bind dCTP. Glu138 serves as the catalytic Proton donor/acceptor.

Belongs to the dCTP deaminase family. As to quaternary structure, homotrimer.

The catalysed reaction is dCTP + H2O + H(+) = dUTP + NH4(+). The protein operates within pyrimidine metabolism; dUMP biosynthesis; dUMP from dCTP (dUTP route): step 1/2. Its function is as follows. Catalyzes the deamination of dCTP to dUTP. The chain is dCTP deaminase from Alcanivorax borkumensis (strain ATCC 700651 / DSM 11573 / NCIMB 13689 / SK2).